A 280-amino-acid chain; its full sequence is Dimethylglycine N-methyltransferase (280 aa).

This sequence belongs to the methyltransferase superfamily. Monomer.

The catalysed reaction is N,N-dimethylglycine + S-adenosyl-L-methionine = glycine betaine + S-adenosyl-L-homocysteine + H(+). Its pathway is amine and polyamine biosynthesis; betaine biosynthesis via glycine pathway; betaine from glycine: step 3/3. In terms of biological role, catalyzes the methylation of dimethylglycine to betaine with S-adenosylmethionine (AdoMet) acting as the methyl donor. It has strict specificity for dimethylglycine as the methyl group acceptors. The protein is Dimethylglycine N-methyltransferase of Parasynechococcus marenigrum (strain WH8102).